The primary structure comprises 359 residues: N-acetyl-gamma-glutamyl-phosphate reductase (359 aa).

Residue C162 is part of the active site.

This sequence belongs to the NAGSA dehydrogenase family. Type 1 subfamily.

It localises to the cytoplasm. The enzyme catalyses N-acetyl-L-glutamate 5-semialdehyde + phosphate + NADP(+) = N-acetyl-L-glutamyl 5-phosphate + NADPH + H(+). It participates in amino-acid biosynthesis; L-arginine biosynthesis; N(2)-acetyl-L-ornithine from L-glutamate: step 3/4. Catalyzes the NADPH-dependent reduction of N-acetyl-5-glutamyl phosphate to yield N-acetyl-L-glutamate 5-semialdehyde. In Prochlorococcus marinus (strain SARG / CCMP1375 / SS120), this protein is N-acetyl-gamma-glutamyl-phosphate reductase.